A 450-amino-acid chain; its full sequence is Ribosomal protein uS12 methylthiotransferase RimO (450 aa).

The MTTase N-terminal domain maps to 7 to 123 (QKVSMVSLGC…IAEILAEKSG (117 aa)). [4Fe-4S] cluster-binding residues include C16, C52, C86, C161, C165, and C168. One can recognise a Radical SAM core domain in the interval 147–377 (SSPAWFSYLK…MRIQARLSFK (231 aa)). Residues 380-448 (RELIGTTEQV…DYDLIGEIQE (69 aa)) form the TRAM domain.

It belongs to the methylthiotransferase family. RimO subfamily. The cofactor is [4Fe-4S] cluster.

It localises to the cytoplasm. The catalysed reaction is L-aspartate(89)-[ribosomal protein uS12]-hydrogen + (sulfur carrier)-SH + AH2 + 2 S-adenosyl-L-methionine = 3-methylsulfanyl-L-aspartate(89)-[ribosomal protein uS12]-hydrogen + (sulfur carrier)-H + 5'-deoxyadenosine + L-methionine + A + S-adenosyl-L-homocysteine + 2 H(+). Catalyzes the methylthiolation of an aspartic acid residue of ribosomal protein uS12. This Pelobacter propionicus (strain DSM 2379 / NBRC 103807 / OttBd1) protein is Ribosomal protein uS12 methylthiotransferase RimO.